The following is a 236-amino-acid chain: 2-C-methyl-D-erythritol 4-phosphate cytidylyltransferase (236 aa).

It belongs to the IspD/TarI cytidylyltransferase family. IspD subfamily. Homodimer.

The enzyme catalyses 2-C-methyl-D-erythritol 4-phosphate + CTP + H(+) = 4-CDP-2-C-methyl-D-erythritol + diphosphate. The protein operates within isoprenoid biosynthesis; isopentenyl diphosphate biosynthesis via DXP pathway; isopentenyl diphosphate from 1-deoxy-D-xylulose 5-phosphate: step 2/6. In terms of biological role, catalyzes the formation of 4-diphosphocytidyl-2-C-methyl-D-erythritol from CTP and 2-C-methyl-D-erythritol 4-phosphate (MEP). The chain is 2-C-methyl-D-erythritol 4-phosphate cytidylyltransferase from Salmonella paratyphi C (strain RKS4594).